The following is an 835-amino-acid chain: Ion-translocating oxidoreductase complex subunit C (835 aa).

4Fe-4S ferredoxin-type domains lie at 368–397 and 407–436; these read YAPP…QQLY and KSEE…IQYF. Cys377, Cys380, Cys383, Cys387, Cys416, Cys419, Cys422, and Cys426 together coordinate [4Fe-4S] cluster. Positions 468-489 are enriched in basic and acidic residues; sequence AREEQERKARAQKAMEARRQEM. Disordered regions lie at residues 468–492, 540–574, 586–618, 634–666, 682–714, 730–762, and 778–811; these read AREE…MKTA, QRKA…SKSA, KAAQ…AEDP, KAAQ…ADDP, and KAAQ…EDPR. A compositionally biased stretch (polar residues) spans 552 to 561; it reads TQNTDVSQVE. Polar residues predominate over residues 648-657; the sequence is SSSNTLSVGN. 2 stretches are compositionally biased toward polar residues: residues 745-756 and 793-804; these read SSDTLSVGNETE.

This sequence belongs to the 4Fe4S bacterial-type ferredoxin family. RnfC subfamily. As to quaternary structure, the complex is composed of six subunits: RnfA, RnfB, RnfC, RnfD, RnfE and RnfG. [4Fe-4S] cluster is required as a cofactor.

Its subcellular location is the cell inner membrane. Functionally, part of a membrane-bound complex that couples electron transfer with translocation of ions across the membrane. This chain is Ion-translocating oxidoreductase complex subunit C, found in Pasteurella multocida (strain Pm70).